We begin with the raw amino-acid sequence, 233 residues long: Large ribosomal subunit protein uL1 (233 aa).

It belongs to the universal ribosomal protein uL1 family. In terms of assembly, part of the 50S ribosomal subunit.

Its function is as follows. Binds directly to 23S rRNA. The L1 stalk is quite mobile in the ribosome, and is involved in E site tRNA release. In terms of biological role, protein L1 is also a translational repressor protein, it controls the translation of the L11 operon by binding to its mRNA. This is Large ribosomal subunit protein uL1 from Trichlorobacter lovleyi (strain ATCC BAA-1151 / DSM 17278 / SZ) (Geobacter lovleyi).